We begin with the raw amino-acid sequence, 76 residues long: Conotoxin PnMKLT1-1111 (76 aa).

The N-terminal stretch at 1–22 (MKLTCMMIVAVLFLTAWTVVTA) is a signal peptide. Positions 23–50 (VPHSNKRLANLYLKARHEMKNPEASNVD) are excised as a propeptide. Cystine bridges form between Cys-53–Cys-67, Cys-60–Cys-71, and Cys-66–Cys-75.

Belongs to the conotoxin O1 superfamily. As to expression, expressed by the venom duct.

The protein localises to the secreted. This chain is Conotoxin PnMKLT1-1111, found in Conus pennaceus (Feathered cone).